The chain runs to 436 residues: GTPase Der (436 aa).

EngA-type G domains are found at residues 4 to 167 (PTIA…PNEY) and 175 to 351 (IKFS…ESQN). GTP is bound by residues 10–17 (GRPNVGKS), 57–61 (DTGGI), 119–122 (NKVD), 181–188 (GRPNVGKS), 229–233 (DTAGM), and 294–297 (NKWD). Residues 352 to 436 (TRIPSAVLND…PIHLIARKRK (85 aa)) form the KH-like domain.

Belongs to the TRAFAC class TrmE-Era-EngA-EngB-Septin-like GTPase superfamily. EngA (Der) GTPase family. As to quaternary structure, associates with the 50S ribosomal subunit.

GTPase that plays an essential role in the late steps of ribosome biogenesis. The polypeptide is GTPase Der (Streptococcus pneumoniae (strain JJA)).